We begin with the raw amino-acid sequence, 456 residues long: Trigger factor (456 aa).

Positions 192 to 277 constitute a PPIase FKBP-type domain; that stretch reads GDTVVIDFVG…IHEVKTKEVP (86 aa).

It belongs to the FKBP-type PPIase family. Tig subfamily.

The protein resides in the cytoplasm. It carries out the reaction [protein]-peptidylproline (omega=180) = [protein]-peptidylproline (omega=0). In terms of biological role, involved in protein export. Acts as a chaperone by maintaining the newly synthesized protein in an open conformation. Functions as a peptidyl-prolyl cis-trans isomerase. In Streptococcus pyogenes serotype M2 (strain MGAS10270), this protein is Trigger factor.